Reading from the N-terminus, the 248-residue chain is Proteasome subunit alpha (248 aa).

Belongs to the peptidase T1A family. In terms of assembly, the 20S proteasome core is composed of 14 alpha and 14 beta subunits that assemble into four stacked heptameric rings, resulting in a barrel-shaped structure. The two inner rings, each composed of seven catalytic beta subunits, are sandwiched by two outer rings, each composed of seven alpha subunits. The catalytic chamber with the active sites is on the inside of the barrel. Has a gated structure, the ends of the cylinder being occluded by the N-termini of the alpha-subunits. Is capped by the proteasome-associated ATPase, ARC.

The protein resides in the cytoplasm. The protein operates within protein degradation; proteasomal Pup-dependent pathway. Its activity is regulated as follows. The formation of the proteasomal ATPase ARC-20S proteasome complex, likely via the docking of the C-termini of ARC into the intersubunit pockets in the alpha-rings, may trigger opening of the gate for substrate entry. Interconversion between the open-gate and close-gate conformations leads to a dynamic regulation of the 20S proteasome proteolysis activity. Component of the proteasome core, a large protease complex with broad specificity involved in protein degradation. The protein is Proteasome subunit alpha of Mycobacterium bovis (strain BCG / Pasteur 1173P2).